A 265-amino-acid chain; its full sequence is Glutamate racemase (265 aa).

Substrate contacts are provided by residues 12 to 13 (DS) and 44 to 45 (YG). Cys-75 serves as the catalytic Proton donor/acceptor. Residue 76 to 77 (NT) coordinates substrate. Residue Cys-186 is the Proton donor/acceptor of the active site. Residue 187–188 (TH) participates in substrate binding.

It belongs to the aspartate/glutamate racemases family.

It carries out the reaction L-glutamate = D-glutamate. Its pathway is cell wall biogenesis; peptidoglycan biosynthesis. Provides the (R)-glutamate required for cell wall biosynthesis. This chain is Glutamate racemase, found in Pseudomonas aeruginosa (strain ATCC 15692 / DSM 22644 / CIP 104116 / JCM 14847 / LMG 12228 / 1C / PRS 101 / PAO1).